The following is a 454-amino-acid chain: N-myc 2 proto-oncogene protein (454 aa).

Disordered stretches follow at residues 132-166 (SEKMQHGHEPAATGPATQVPGAGAASPAGRGHSGT), 230-269 (VAAPPGLSSRPPNGGDHKVLSTSGEDALSDEVDEEEDEEE), and 325-374 (PSPY…VRRR). Low complexity predominate over residues 151 to 161 (PGAGAASPAGR). A compositionally biased stretch (acidic residues) spans 256-269 (ALSDEVDEEEDEEE). The segment covering 363–374 (RKSDSEDSVRRR) has biased composition (basic and acidic residues). Residues 371-423 (VRRRNHNILERQRRNDLRSSFTTLRDHVPELVKNEKAAKVVILKKACEYVHYL) form the bHLH domain. Positions 423–444 (LQAKEHQLLMEKEKLQARQQQL) are leucine-zipper.

As to quaternary structure, efficient DNA binding requires dimerization with another bHLH protein.

The protein localises to the nucleus. This Marmota monax (Woodchuck) protein is N-myc 2 proto-oncogene protein (N-MYC2).